A 390-amino-acid chain; its full sequence is tRNA (guanine(26)-N(2))-dimethyltransferase (390 aa).

The region spanning 4–378 is the Trm1 methyltransferase domain; it reads HIIEEGLVKI…MPLDELKQLI (375 aa). The S-adenosyl-L-methionine site is built by R37, R67, D85, D112, and A113. Zn(2+)-binding residues include C245, C248, C265, and C268.

It belongs to the class I-like SAM-binding methyltransferase superfamily. Trm1 family.

It catalyses the reaction guanosine(26) in tRNA + 2 S-adenosyl-L-methionine = N(2)-dimethylguanosine(26) in tRNA + 2 S-adenosyl-L-homocysteine + 2 H(+). Dimethylates a single guanine residue at position 26 of a number of tRNAs using S-adenosyl-L-methionine as donor of the methyl groups. This Methanosphaera stadtmanae (strain ATCC 43021 / DSM 3091 / JCM 11832 / MCB-3) protein is tRNA (guanine(26)-N(2))-dimethyltransferase.